The primary structure comprises 159 residues: ATP synthase subunit delta, mitochondrial (159 aa).

A mitochondrion-targeting transit peptide spans 1-23 (MFRLSAARTLAKSVNTVVAKRTY).

Belongs to the ATPase epsilon chain family. F-type ATPases have 2 components, CF(1) - the catalytic core - and CF(0) - the membrane proton channel. CF(1) has five subunits: alpha(3), beta(3), gamma(1), delta(1), epsilon(1). CF(0) has three main subunits: a, b and c.

It localises to the mitochondrion. It is found in the mitochondrion inner membrane. Functionally, mitochondrial membrane ATP synthase (F(1)F(0) ATP synthase or Complex V) produces ATP from ADP in the presence of a proton gradient across the membrane which is generated by electron transport complexes of the respiratory chain. F-type ATPases consist of two structural domains, F(1) - containing the extramembraneous catalytic core, and F(0) - containing the membrane proton channel, linked together by a central stalk and a peripheral stalk. During catalysis, ATP turnover in the catalytic domain of F(1) is coupled via a rotary mechanism of the central stalk subunits to proton translocation. Part of the complex F(1) domain and of the central stalk which is part of the complex rotary element. Rotation of the central stalk against the surrounding alpha(3)beta(3) subunits leads to hydrolysis of ATP in three separate catalytic sites on the beta subunits. This Kluyveromyces lactis (strain ATCC 8585 / CBS 2359 / DSM 70799 / NBRC 1267 / NRRL Y-1140 / WM37) (Yeast) protein is ATP synthase subunit delta, mitochondrial (ATP16).